The sequence spans 368 residues: 4-hydroxy-3-methylbut-2-en-1-yl diphosphate synthase (flavodoxin) (368 aa).

Cysteine 271, cysteine 274, cysteine 306, and glutamate 313 together coordinate [4Fe-4S] cluster.

This sequence belongs to the IspG family. The cofactor is [4Fe-4S] cluster.

It carries out the reaction (2E)-4-hydroxy-3-methylbut-2-enyl diphosphate + oxidized [flavodoxin] + H2O + 2 H(+) = 2-C-methyl-D-erythritol 2,4-cyclic diphosphate + reduced [flavodoxin]. The protein operates within isoprenoid biosynthesis; isopentenyl diphosphate biosynthesis via DXP pathway; isopentenyl diphosphate from 1-deoxy-D-xylulose 5-phosphate: step 5/6. Converts 2C-methyl-D-erythritol 2,4-cyclodiphosphate (ME-2,4cPP) into 1-hydroxy-2-methyl-2-(E)-butenyl 4-diphosphate. This is 4-hydroxy-3-methylbut-2-en-1-yl diphosphate synthase (flavodoxin) from Histophilus somni (strain 129Pt) (Haemophilus somnus).